We begin with the raw amino-acid sequence, 1588 residues long: Autotransporter adhesin EhaG (1588 aa).

The signal sequence occupies residues 1–53 (MNKIFKVIWNPATGNYTVTSETAKSRGKKSGRSKLLISALVAGGMLSSFGALA). The tract at residues 54–1499 (NAGNDNGQGV…QETKQYTDQR (1446 aa)) is surface exposed passenger domain. The tract at residues 1500-1588 (MVEMDNKLSK…SAALGAGIQW (89 aa)) is translocator domain. Beta stranded transmembrane passes span 1534 to 1544 (GASMASIGGGT), 1548 to 1558 (ESAVALGVSMV), 1567 to 1573 (KLQGSTN), and 1577 to 1588 (EYSAALGAGIQW).

This sequence belongs to the autotransporter-2 (AT-2) (TC 1.B.40) family. As to quaternary structure, homotrimer.

It is found in the cell surface. It localises to the cell outer membrane. Functionally, mediates aggregation, biofilm formation and adhesion to a range of extracellular matrix (ECM) proteins, such as fibronectin, fibrinogen, laminin and collagen types I, II, III, and V. Mediates adhesion to intestinal epithelial cells. The chain is Autotransporter adhesin EhaG from Escherichia coli O157:H7.